We begin with the raw amino-acid sequence, 136 residues long: uncharacterized protein (136 aa).

It belongs to the MG439/MG440 family.

This is an uncharacterized protein from Mycoplasma pneumoniae (strain ATCC 29342 / M129 / Subtype 1) (Mycoplasmoides pneumoniae).